A 454-amino-acid chain; its full sequence is MFDLEKFWDSFNAEMRSEFNEVSYNAWFKNTKPVSFNKDTHELVISVQTPVAKGYWEQNISANLIQSAYAYAGIDIYPVFVVKNGPTPSSERMLEPQPQAKPEKARPQGREFTKDLRLNEKYTFENFIQGEGNKLAAGAALAVADNPGTFYNPLFIFGGVGLGKTHLMQAIGHQMLAERPDAKVVYIQSETFVNDFINSIKNKTQDKFREKYRTADLLLVDDIQFFAKKEGIQEEFFHTFETLYNDQKQIVMTSDRLPTEIPDLSERLVSRFAWGLQVEITPPDLETRIAILRKKAESEGLEIDESTLDYVASQVDTNIRELEGALVKVQAQATIQKQDINIGLARSALADLKLVQKSRGLQISKIQEVVANYFQTSVPDLKGKKRVRQIVIPRQIAMYLSRELTDASLPKIGQEFGGKDHTTVMHACDKIARQIKTDTEIKSAVSDLRQMLER.

The tract at residues 1 to 74 (MFDLEKFWDS…IQSAYAYAGI (74 aa)) is domain I, interacts with DnaA modulators. The domain II stretch occupies residues 74–116 (IDIYPVFVVKNGPTPSSERMLEPQPQAKPEKARPQGREFTKDL). Residues 88–112 (PSSERMLEPQPQAKPEKARPQGREF) form a disordered region. Basic and acidic residues predominate over residues 101–112 (KPEKARPQGREF). Positions 117 to 333 (RLNEKYTFEN…GALVKVQAQA (217 aa)) are domain III, AAA+ region. Gly-161, Gly-163, Lys-164, and Thr-165 together coordinate ATP. Positions 334–454 (TIQKQDINIG…VSDLRQMLER (121 aa)) are domain IV, binds dsDNA.

The protein belongs to the DnaA family. As to quaternary structure, oligomerizes as a right-handed, spiral filament on DNA at oriC.

It is found in the cytoplasm. Plays an essential role in the initiation and regulation of chromosomal replication. ATP-DnaA binds to the origin of replication (oriC) to initiate formation of the DNA replication initiation complex once per cell cycle. Binds the DnaA box (a 9 base pair repeat at the origin) and separates the double-stranded (ds)DNA. Forms a right-handed helical filament on oriC DNA; dsDNA binds to the exterior of the filament while single-stranded (ss)DNA is stabiized in the filament's interior. The ATP-DnaA-oriC complex binds and stabilizes one strand of the AT-rich DNA unwinding element (DUE), permitting loading of DNA polymerase. After initiation quickly degrades to an ADP-DnaA complex that is not apt for DNA replication. Binds acidic phospholipids. The chain is Chromosomal replication initiator protein DnaA from Lactobacillus delbrueckii subsp. bulgaricus (strain ATCC 11842 / DSM 20081 / BCRC 10696 / JCM 1002 / NBRC 13953 / NCIMB 11778 / NCTC 12712 / WDCM 00102 / Lb 14).